The sequence spans 435 residues: Mitogen-activated protein kinase HOG1 (435 aa).

An N-acetylthreonine modification is found at T2. One can recognise a Protein kinase domain in the interval 23–302; the sequence is YNDLNPVGMG…AADALAHPYS (280 aa). ATP-binding positions include 29–37 and K52; that span reads VGMGAFGLV. The active-site Proton acceptor is the D144. C156 and C161 together coordinate arsenite. T174 carries the phosphothreonine; by PBS2 modification. A TXY motif is present at residues 174–176; it reads TGY. Y176 carries the post-translational modification Phosphotyrosine; by PBS2. Residue C205 participates in arsenite binding.

It belongs to the protein kinase superfamily. Ser/Thr protein kinase family. MAP kinase subfamily. HOG1 sub-subfamily. As to quaternary structure, interacts with CDC37, HOT1, KIN28, PTP2, PTP3, RBP1, RCK2, RPD3, SIC1, SMP1 and SIN4. Requires Mg(2+) as cofactor. In terms of processing, activated by PBS2-mediated concomitant phosphorylation at Thr-174 and Tyr-176. Post-translationally, dually phosphorylated on Thr-174 and Tyr-176, which activates the enzyme.

Its subcellular location is the cytoplasm. It localises to the nucleus. It carries out the reaction L-seryl-[protein] + ATP = O-phospho-L-seryl-[protein] + ADP + H(+). It catalyses the reaction L-threonyl-[protein] + ATP = O-phospho-L-threonyl-[protein] + ADP + H(+). Its activity is regulated as follows. Activated by tyrosine and threonine phosphorylation. Inactivated by dephosphorylation via recruitment of PTC1 to the PBS2-HOG1 complex after adaptation to osmotic stress. PTP2 and PTP3 inactivate HOG1 by dephosphorylating Tyr-176, while the PP2Cs PTC1 and PTC2 or PTC3 dephosphorylate Thr-174 in the activation loop. Its function is as follows. Proline-directed serine/threonine-protein kinase involved in a signal transduction pathway that is activated by changes in the osmolarity of the extracellular environment. Controls osmotic regulation of transcription via the stress response element (STRE) in promoters of target genes. Upon osmotic shock, associates with the SKO1-SSN6-TUP1 complex, phosphorylates SKO1, and converts it into an activator that subsequently recruits Swi/Snf and SAGA complexes. Activates the SMP1 transcription factor and the RCK2 kinase, both also involved in the regulation of the expression of a subset of osmotic stress-related genes. Phosphorylation of HSL1 by HOG1 leads to a G2 arrest essential for cell survival at high osmolarity. Also mediates cell-cycle arrest in G1 phase by the dual targeting of SIC1. Phosphorylates methyltransferase DOT1 at least on 'Ser-565' and 'Thr-576'. Regulates MFA2 ARE-mediated translation in response to carbon source. Targets RPD3 histone deacetylase to osmoresponsive promoters to induce gene expression on stress. Required for the Golgi apparatus localization of MNN1. Plays an essential role in maintaining water homeostasis, arsenite detoxification, copper-resistance, cold-resistance, hydrogen peroxide response, adaptation to citric acid stress, and repression of the mating pathway activity. Functions as an arsenic sensor and effector via direct binding to arsenic and subsequent phosphorylation of the ARR1 transcription factor. This is Mitogen-activated protein kinase HOG1 (HOG1) from Saccharomyces cerevisiae (strain ATCC 204508 / S288c) (Baker's yeast).